The chain runs to 420 residues: Tyrosine--tRNA ligase 2 (420 aa).

Tyr-36 is an L-tyrosine binding site. Positions 41–50 (PTADSLHIGH) match the 'HIGH' region motif. L-tyrosine-binding residues include Tyr-171 and Gln-175. Residues 231-235 (KFGKT) carry the 'KMSKS' region motif. Lys-234 lines the ATP pocket. In terms of domain architecture, S4 RNA-binding spans 354–420 (LSLVDLLVTS…GKKKYFLLKY (67 aa)).

Belongs to the class-I aminoacyl-tRNA synthetase family. TyrS type 1 subfamily. As to quaternary structure, homodimer.

The protein resides in the cytoplasm. The enzyme catalyses tRNA(Tyr) + L-tyrosine + ATP = L-tyrosyl-tRNA(Tyr) + AMP + diphosphate + H(+). Its function is as follows. Catalyzes the attachment of tyrosine to tRNA(Tyr) in a two-step reaction: tyrosine is first activated by ATP to form Tyr-AMP and then transferred to the acceptor end of tRNA(Tyr). The chain is Tyrosine--tRNA ligase 2 from Enterococcus faecalis (strain ATCC 700802 / V583).